Reading from the N-terminus, the 433-residue chain is uncharacterized protein (433 aa).

The interval 1–126 (MAAHIALIAH…VIKLLGKTKT (126 aa)) is methylglyoxal synthase. Residues 1 to 145 (MAAHIALIAH…GQGNVERELD (145 aa)) enclose the MGS-like domain. The active site involves aspartate 62. The region spanning 127 to 262 (GHLIFNPVAG…VDTALCNDIP (136 aa)) is the DAGKc domain.

In the N-terminal section; belongs to the methylglyoxal synthase family.

This is an uncharacterized protein from Synechocystis sp. (strain ATCC 27184 / PCC 6803 / Kazusa).